We begin with the raw amino-acid sequence, 1222 residues long: DNA-directed RNA polymerase II subunit RPB2 (1222 aa).

Residue aspartate 835 participates in Mg(2+) binding. Zn(2+) is bound by residues cysteine 1161, cysteine 1164, cysteine 1180, and cysteine 1183. The segment at 1161 to 1183 (CGICGLMTVVAKLKHNQFECRGC) adopts a C4-type zinc-finger fold.

It belongs to the RNA polymerase beta chain family. As to quaternary structure, component of the RNA polymerase II (Pol II) complex consisting of 12 subunits.

It localises to the nucleus. It carries out the reaction RNA(n) + a ribonucleoside 5'-triphosphate = RNA(n+1) + diphosphate. Its function is as follows. DNA-dependent RNA polymerase catalyzes the transcription of DNA into RNA using the four ribonucleoside triphosphates as substrates. Second largest component of RNA polymerase II which synthesizes mRNA precursors and many functional non-coding RNAs. Proposed to contribute to the polymerase catalytic activity and forms the polymerase active center together with the largest subunit. Pol II is the central component of the basal RNA polymerase II transcription machinery. It is composed of mobile elements that move relative to each other. RPB2 is part of the core element with the central large cleft, the clamp element that moves to open and close the cleft and the jaws that are thought to grab the incoming DNA template. This is DNA-directed RNA polymerase II subunit RPB2 (RPB2) from Eremothecium gossypii (strain ATCC 10895 / CBS 109.51 / FGSC 9923 / NRRL Y-1056) (Yeast).